The following is a 396-amino-acid chain: 1-deoxy-D-xylulose 5-phosphate reductoisomerase (396 aa).

Positions 13, 14, 15, 16, and 127 each coordinate NADPH. Position 128 (Lys128) interacts with 1-deoxy-D-xylulose 5-phosphate. NADPH is bound at residue Glu129. Asp153 contributes to the Mn(2+) binding site. 4 residues coordinate 1-deoxy-D-xylulose 5-phosphate: Ser154, Glu155, Ser184, and His207. A Mn(2+)-binding site is contributed by Glu155. Gly213 serves as a coordination point for NADPH. 1-deoxy-D-xylulose 5-phosphate-binding residues include Ser220, Asn225, Lys226, and Glu229. Glu229 contacts Mn(2+).

The protein belongs to the DXR family. Mg(2+) serves as cofactor. It depends on Mn(2+) as a cofactor.

The enzyme catalyses 2-C-methyl-D-erythritol 4-phosphate + NADP(+) = 1-deoxy-D-xylulose 5-phosphate + NADPH + H(+). It participates in isoprenoid biosynthesis; isopentenyl diphosphate biosynthesis via DXP pathway; isopentenyl diphosphate from 1-deoxy-D-xylulose 5-phosphate: step 1/6. In terms of biological role, catalyzes the NADPH-dependent rearrangement and reduction of 1-deoxy-D-xylulose-5-phosphate (DXP) to 2-C-methyl-D-erythritol 4-phosphate (MEP). This chain is 1-deoxy-D-xylulose 5-phosphate reductoisomerase, found in Pseudomonas putida (strain W619).